An 876-amino-acid polypeptide reads, in one-letter code: Eukaryotic translation initiation factor 3 subunit C (876 aa).

2 disordered regions span residues 1 to 25 (MSRFFATGTDSESESSSEDEPVVRA) and 154 to 233 (SXFR…IREQ). Over residues 11 to 20 (SESESSSEDE) the composition is skewed to acidic residues. Basic and acidic residues-rich tracts occupy residues 154 to 172 (SXFREDPDLPDDNERKDSS) and 182 to 192 (KPIKEKPKPEP). The segment covering 206–219 (SMDWASSSSDSSFS) has biased composition (low complexity). The PCI domain occupies 632–808 (FHMHINLELL…ECAILHRSEP (177 aa)). Residues 839–876 (FFQRGGAQRGEGRQRERPREGWNRRTRNRRRDDERADD) form a disordered region. Positions 848–861 (GEGRQRERPREGWN) are enriched in basic and acidic residues.

It belongs to the eIF-3 subunit C family. Component of the eukaryotic translation initiation factor 3 (eIF-3) complex.

The protein localises to the cytoplasm. Its function is as follows. Component of the eukaryotic translation initiation factor 3 (eIF-3) complex, which is involved in protein synthesis of a specialized repertoire of mRNAs and, together with other initiation factors, stimulates binding of mRNA and methionyl-tRNAi to the 40S ribosome. The eIF-3 complex specifically targets and initiates translation of a subset of mRNAs involved in cell proliferation. This Bombyx mori (Silk moth) protein is Eukaryotic translation initiation factor 3 subunit C.